Consider the following 198-residue polypeptide: Synaptobrevin homolog YKT6-B (198 aa).

One can recognise a Longin domain in the interval 8-127 (VLYKGENKVH…IQYNALDSYL (120 aa)). The v-SNARE coiled-coil homology domain maps to 138-198 (PMSKVQAELD…RKQNSCCDIM (61 aa)). C194 is lipidated: S-palmitoyl cysteine. A Cysteine methyl ester modification is found at C195. A lipid anchor (S-farnesyl cysteine) is attached at C195. A propeptide spans 196 to 198 (DIM) (removed in mature form).

Belongs to the synaptobrevin family. Palmitoylated; catalyzes its own palmitoylation. Palmitoylation is required for Golgi targeting. In terms of processing, farnesylation is required for Golgi targeting.

Its subcellular location is the cytoplasm. It localises to the cytosol. The protein resides in the cytoplasmic vesicle membrane. It is found in the golgi apparatus membrane. In terms of biological role, vesicular soluble NSF attachment protein receptor (v-SNARE) mediating vesicle docking and fusion to a specific acceptor cellular compartment. Functions in endoplasmic reticulum to Golgi transport; as part of a SNARE complex composed of GOSR1, GOSR2 and STX5. Functions in early/recycling endosome to TGN transport; as part of a SNARE complex composed of BET1L, GOSR1 and STX5. Has a S-palmitoyl transferase activity. The chain is Synaptobrevin homolog YKT6-B (ykt6-b) from Xenopus laevis (African clawed frog).